Here is a 403-residue protein sequence, read N- to C-terminus: 1-deoxy-D-xylulose 5-phosphate reductoisomerase (403 aa).

NADPH-binding residues include threonine 18, glycine 19, serine 20, isoleucine 21, glutamine 46, and asparagine 132. Residue lysine 133 coordinates 1-deoxy-D-xylulose 5-phosphate. Position 134 (glutamate 134) interacts with NADPH. Aspartate 158 is a Mn(2+) binding site. 4 residues coordinate 1-deoxy-D-xylulose 5-phosphate: serine 159, glutamate 160, serine 189, and histidine 212. Residue glutamate 160 participates in Mn(2+) binding. Glycine 218 lines the NADPH pocket. Residues serine 225, asparagine 230, lysine 231, and glutamate 234 each contribute to the 1-deoxy-D-xylulose 5-phosphate site. A Mn(2+)-binding site is contributed by glutamate 234.

It belongs to the DXR family. Mg(2+) is required as a cofactor. Requires Mn(2+) as cofactor.

The catalysed reaction is 2-C-methyl-D-erythritol 4-phosphate + NADP(+) = 1-deoxy-D-xylulose 5-phosphate + NADPH + H(+). Its pathway is isoprenoid biosynthesis; isopentenyl diphosphate biosynthesis via DXP pathway; isopentenyl diphosphate from 1-deoxy-D-xylulose 5-phosphate: step 1/6. Catalyzes the NADPH-dependent rearrangement and reduction of 1-deoxy-D-xylulose-5-phosphate (DXP) to 2-C-methyl-D-erythritol 4-phosphate (MEP). The polypeptide is 1-deoxy-D-xylulose 5-phosphate reductoisomerase (Aromatoleum aromaticum (strain DSM 19018 / LMG 30748 / EbN1) (Azoarcus sp. (strain EbN1))).